The chain runs to 480 residues: Aspartyl/glutamyl-tRNA(Asn/Gln) amidotransferase subunit B (480 aa).

Belongs to the GatB/GatE family. GatB subfamily. In terms of assembly, heterotrimer of A, B and C subunits.

It catalyses the reaction L-glutamyl-tRNA(Gln) + L-glutamine + ATP + H2O = L-glutaminyl-tRNA(Gln) + L-glutamate + ADP + phosphate + H(+). The catalysed reaction is L-aspartyl-tRNA(Asn) + L-glutamine + ATP + H2O = L-asparaginyl-tRNA(Asn) + L-glutamate + ADP + phosphate + 2 H(+). Allows the formation of correctly charged Asn-tRNA(Asn) or Gln-tRNA(Gln) through the transamidation of misacylated Asp-tRNA(Asn) or Glu-tRNA(Gln) in organisms which lack either or both of asparaginyl-tRNA or glutaminyl-tRNA synthetases. The reaction takes place in the presence of glutamine and ATP through an activated phospho-Asp-tRNA(Asn) or phospho-Glu-tRNA(Gln). This Caldicellulosiruptor saccharolyticus (strain ATCC 43494 / DSM 8903 / Tp8T 6331) protein is Aspartyl/glutamyl-tRNA(Asn/Gln) amidotransferase subunit B.